The following is a 190-amino-acid chain: MDRKEQKSIIEGLLFVSGDEGIYPEQIAKVLEIEMNEVMNILEEMQQECEGANRGLQIVQYAKVYRFATKKEHASYYQKLIDTPTAASLSQAALETLAIVAYRQPITRTEMEEIRGVKTDKALQTLVSHLLIKEMGRAEGPGRPILYGTTKEFLDTFGLKTLDDLPPLSEENEQMNEADLFFGSLQEISK.

It belongs to the ScpB family. As to quaternary structure, homodimer. Homodimerization may be required to stabilize the binding of ScpA to the Smc head domains. Component of a cohesin-like complex composed of ScpA, ScpB and the Smc homodimer, in which ScpA and ScpB bind to the head domain of Smc. The presence of the three proteins is required for the association of the complex with DNA.

Its subcellular location is the cytoplasm. Functionally, participates in chromosomal partition during cell division. May act via the formation of a condensin-like complex containing Smc and ScpA that pull DNA away from mid-cell into both cell halves. This chain is Segregation and condensation protein B, found in Bacillus cereus (strain G9842).